A 316-amino-acid chain; its full sequence is Aspartate carbamoyltransferase catalytic subunit (316 aa).

Carbamoyl phosphate contacts are provided by Arg59 and Thr60. An L-aspartate-binding site is contributed by Lys88. Residues Arg109, His137, and Gln140 each coordinate carbamoyl phosphate. L-aspartate is bound by residues Arg170 and Arg232. Residues Leu269 and Pro270 each coordinate carbamoyl phosphate.

It belongs to the aspartate/ornithine carbamoyltransferase superfamily. ATCase family. In terms of assembly, heterooligomer of catalytic and regulatory chains.

It catalyses the reaction carbamoyl phosphate + L-aspartate = N-carbamoyl-L-aspartate + phosphate + H(+). Its pathway is pyrimidine metabolism; UMP biosynthesis via de novo pathway; (S)-dihydroorotate from bicarbonate: step 2/3. In terms of biological role, catalyzes the condensation of carbamoyl phosphate and aspartate to form carbamoyl aspartate and inorganic phosphate, the committed step in the de novo pyrimidine nucleotide biosynthesis pathway. The protein is Aspartate carbamoyltransferase catalytic subunit of Methanobrevibacter smithii (strain ATCC 35061 / DSM 861 / OCM 144 / PS).